Consider the following 150-residue polypeptide: Globin-2 A chain (150 aa).

V2 carries the post-translational modification Blocked amino end (Val). Residues 10–150 (CGSEAIKANL…ALVGVVQAAL (141 aa)) form the Globin domain. H102 is a binding site for heme b.

It belongs to the globin family. Heterotetramer of two alpha chains and two beta chains.

The chain is Globin-2 A chain from Anadara inaequivalvis (Inequivalve ark).